A 155-amino-acid chain; its full sequence is Small ribosomal subunit protein uS7 (155 aa).

It belongs to the universal ribosomal protein uS7 family. Part of the 30S ribosomal subunit. Contacts proteins S9 and S11.

Its function is as follows. One of the primary rRNA binding proteins, it binds directly to 16S rRNA where it nucleates assembly of the head domain of the 30S subunit. Is located at the subunit interface close to the decoding center, probably blocks exit of the E-site tRNA. The chain is Small ribosomal subunit protein uS7 from Chlorobium luteolum (strain DSM 273 / BCRC 81028 / 2530) (Pelodictyon luteolum).